The sequence spans 252 residues: Tumor necrosis factor ligand superfamily member 15 (252 aa).

Residues 1-39 (MAEELGLGFGEGVPVEVLPEGCRHRPEARAGLAARSKAC) are Cytoplasmic-facing. A helical; Signal-anchor for type II membrane protein membrane pass occupies residues 40-60 (LALTCCLLSFPILAGLSTLLM). At 61-252 (AGQLRVPGKD…DKTFFGAFLL (192 aa)) the chain is on the extracellular side. The THD domain occupies 96-252 (PRAHLTIKKQ…DKTFFGAFLL (157 aa)). A glycan (N-linked (GlcNAc...) asparagine) is linked at Asn137. Cys163 and Cys203 are oxidised to a cystine. An N-linked (GlcNAc...) asparagine glycan is attached at Asn230.

This sequence belongs to the tumor necrosis factor family. In terms of assembly, homotrimer.

The protein localises to the membrane. Its function is as follows. Receptor for TNFRSF25 and TNFRSF6B. Mediates activation of NF-kappa-B. Inhibits vascular endothelial growth and angiogenesis (in vitro). Promotes activation of caspases and apoptosis. Promotes splenocyte alloactivation. This is Tumor necrosis factor ligand superfamily member 15 (Tnfsf15) from Mus musculus (Mouse).